A 501-amino-acid chain; its full sequence is Lysine--tRNA ligase (501 aa).

Mg(2+)-binding residues include Glu404 and Glu411.

The protein belongs to the class-II aminoacyl-tRNA synthetase family. Homodimer. The cofactor is Mg(2+).

It localises to the cytoplasm. It catalyses the reaction tRNA(Lys) + L-lysine + ATP = L-lysyl-tRNA(Lys) + AMP + diphosphate. The polypeptide is Lysine--tRNA ligase (lysS) (Campylobacter jejuni subsp. jejuni serotype O:2 (strain ATCC 700819 / NCTC 11168)).